The chain runs to 106 residues: Iron-sulfur cluster assembly protein CyaY (106 aa).

This sequence belongs to the frataxin family.

In terms of biological role, involved in iron-sulfur (Fe-S) cluster assembly. May act as a regulator of Fe-S biogenesis. The sequence is that of Iron-sulfur cluster assembly protein CyaY from Salmonella typhimurium (strain LT2 / SGSC1412 / ATCC 700720).